A 224-amino-acid polypeptide reads, in one-letter code: Octanoyltransferase (224 aa).

The BPL/LPL catalytic domain occupies 38 to 213; the sequence is AETTDEVWLL…QFVRAAGFQS (176 aa). Substrate is bound by residues 77 to 84, 144 to 146, and 157 to 159; these read RGGQVTYH, SLG, and GLA. Cys-175 functions as the Acyl-thioester intermediate in the catalytic mechanism.

The protein belongs to the LipB family.

Its subcellular location is the cytoplasm. The catalysed reaction is octanoyl-[ACP] + L-lysyl-[protein] = N(6)-octanoyl-L-lysyl-[protein] + holo-[ACP] + H(+). It functions in the pathway protein modification; protein lipoylation via endogenous pathway; protein N(6)-(lipoyl)lysine from octanoyl-[acyl-carrier-protein]: step 1/2. Functionally, catalyzes the transfer of endogenously produced octanoic acid from octanoyl-acyl-carrier-protein onto the lipoyl domains of lipoate-dependent enzymes. Lipoyl-ACP can also act as a substrate although octanoyl-ACP is likely to be the physiological substrate. This Hahella chejuensis (strain KCTC 2396) protein is Octanoyltransferase.